The following is a 339-amino-acid chain: Phosphate acyltransferase (339 aa).

Belongs to the PlsX family. In terms of assembly, homodimer. Probably interacts with PlsY.

It localises to the cytoplasm. The enzyme catalyses a fatty acyl-[ACP] + phosphate = an acyl phosphate + holo-[ACP]. It functions in the pathway lipid metabolism; phospholipid metabolism. Functionally, catalyzes the reversible formation of acyl-phosphate (acyl-PO(4)) from acyl-[acyl-carrier-protein] (acyl-ACP). This enzyme utilizes acyl-ACP as fatty acyl donor, but not acyl-CoA. The protein is Phosphate acyltransferase of Ruthia magnifica subsp. Calyptogena magnifica.